We begin with the raw amino-acid sequence, 187 residues long: Alpha-D-galactose-binding lectin (187 aa).

The N-terminal stretch at 1 to 37 (MTFAKQSCFNSIILLSIATSYFKIGHKISELGNRIEK) is a signal peptide. Thr-39 carries the post-translational modification N-acetylthreonine. Residues 53–56 (HPKG), Asp-64, 72–76 (DIHER), His-101, Gly-104, Glu-112, 120–122 (DRH), His-145, Gly-148, Glu-156, and 164–166 (DKH) each bind N-acetyl-alpha-D-galactosamine.

As to quaternary structure, homodimer. Highest expression in the posterior part of the mantle. Highly expressed in gills and to a lesser extent in mid mantle and anterior muscle. Lowest expression in digestive gland and posterior adductor muscle. Scarcely detectable in hemocytes.

Agglutination of E.coli is inhibited by alpha-galactoside melibiose, but not by beta-galactoside lactose. In terms of biological role, alpha-D-galactose-binding lectin. Binds D-GalNAc, but not glucose or its derivatives. Has hemagglutinating activity towards rabbit erythrocytes. Agglutinates bacteria. Has bacteriostatic activity on both Gram-positive and Gram-negative bacteria including B.subtilis, S.aureus, E.coli and V.parahaemolyticus, respectively. Has a dose-dependent cytotoxic effect on the human globotriaosylceramide (Gb3)-expressing Epstein-Barr virus (EBV)-positive Burkitt's lymphoma (Raji) cell line. Has dose-dependent cytotoxic effect on another Burkitt's lymphoma (Ramos) cell line, which does not possess the EBV genome, but also expresses Gb3. Binds to Gb3 in these cells leading to phosphorylation of MEK1/2, ERK1/2, JNK and p38 kinase, activation of caspase-9/3 and to expression of p21 and tumor necrosis factor (TNF)-alpha. No cytotoxic effect on the human chronic myelogenous leukemia (K-562) cell line, which does not express Gb3. May be involved in innate immunity acting as an antibacterial or antifungal agent. May be a pattern recognition receptor (PRR) involved in recognition of glycans found on parasitic or symbiotic microorganisms. The chain is Alpha-D-galactose-binding lectin from Mytilus galloprovincialis (Mediterranean mussel).